We begin with the raw amino-acid sequence, 98 residues long: Co-chaperonin GroES (98 aa).

It belongs to the GroES chaperonin family. Heptamer of 7 subunits arranged in a ring. Interacts with the chaperonin GroEL.

The protein resides in the cytoplasm. Together with the chaperonin GroEL, plays an essential role in assisting protein folding. The GroEL-GroES system forms a nano-cage that allows encapsulation of the non-native substrate proteins and provides a physical environment optimized to promote and accelerate protein folding. GroES binds to the apical surface of the GroEL ring, thereby capping the opening of the GroEL channel. The sequence is that of Co-chaperonin GroES from Agrobacterium fabrum (strain C58 / ATCC 33970) (Agrobacterium tumefaciens (strain C58)).